We begin with the raw amino-acid sequence, 83 residues long: Weak toxin DE-1 (83 aa).

The first 21 residues, 1-21 (MKTLLLTLVVVTIVCLDLGYS), serve as a signal peptide directing secretion. Disulfide bonds link C24/C45, C38/C62, C64/C75, and C76/C81.

This sequence belongs to the three-finger toxin family. Short-chain subfamily. Type I alpha-neurotoxin sub-subfamily. Expressed by the venom gland.

Its subcellular location is the secreted. The polypeptide is Weak toxin DE-1 (Ophiophagus hannah (King cobra)).